The primary structure comprises 315 residues: Calumenin (315 aa).

The N-terminal stretch at 1–19 is a signal peptide; sequence MDLRQFLLCLSLCTAFALS. Tyrosine 47 carries the post-translational modification Phosphotyrosine. Threonine 65 bears the Phosphothreonine mark. 6 EF-hand domains span residues 68–103, 104–139, 151–186, 188–223, 229–264, and 265–300; these read ESKE…AQKR, WIHE…YVLD, QMMV…DEYD, MKDI…HDGN, WVKT…SDYD, and HAEA…FVGS. Serine 69 is subject to Phosphoserine. Positions 81, 83, 85, 92, 117, 119, 121, and 128 each coordinate Ca(2+). Asparagine 131 is a glycosylation site (N-linked (GlcNAc...) asparagine). Aspartate 164 contributes to the Ca(2+) binding site. At lysine 165 the chain carries N6-acetyllysine. Ca(2+) contacts are provided by aspartate 166, aspartate 168, glutamate 175, aspartate 201, asparagine 203, aspartate 205, glutamate 212, aspartate 242, asparagine 244, aspartate 246, arginine 248, and glutamate 253. Threonine 254 bears the Phosphothreonine mark. 2 positions are modified to phosphoserine: serine 261 and serine 277. Ca(2+)-binding residues include aspartate 278, asparagine 280, aspartate 282, lysine 284, and glutamate 289. Positions 312 to 315 match the Prevents secretion from ER motif; sequence HDEF.

Belongs to the CREC family. In terms of assembly, interacts with GGCX.

The protein resides in the endoplasmic reticulum membrane. Its subcellular location is the golgi apparatus. The protein localises to the secreted. It localises to the melanosome. It is found in the sarcoplasmic reticulum lumen. Involved in regulation of vitamin K-dependent carboxylation of multiple N-terminal glutamate residues. Seems to inhibit gamma-carboxylase GGCX. Binds 7 calcium ions with a low affinity. The protein is Calumenin (CALU) of Mesocricetus auratus (Golden hamster).